The primary structure comprises 358 residues: tRNA(Ile)-lysidine synthase (358 aa).

An ATP-binding site is contributed by 35–40 (SGGPDS).

This sequence belongs to the tRNA(Ile)-lysidine synthase family.

The protein localises to the cytoplasm. The enzyme catalyses cytidine(34) in tRNA(Ile2) + L-lysine + ATP = lysidine(34) in tRNA(Ile2) + AMP + diphosphate + H(+). In terms of biological role, ligates lysine onto the cytidine present at position 34 of the AUA codon-specific tRNA(Ile) that contains the anticodon CAU, in an ATP-dependent manner. Cytidine is converted to lysidine, thus changing the amino acid specificity of the tRNA from methionine to isoleucine. The polypeptide is tRNA(Ile)-lysidine synthase (Bradyrhizobium sp. (strain BTAi1 / ATCC BAA-1182)).